The primary structure comprises 859 residues: ATP-dependent RNA helicase DDX24 (859 aa).

Lys17 bears the N6-acetyllysine mark. Position 60 is a phosphoserine (Ser60). Residues 61–175 (PAKNPSSLFS…SQSTAAKVPK (115 aa)) are disordered. Lys71 carries the post-translational modification N6-acetyllysine. Phosphoserine occurs at positions 82 and 94. Residues 82–91 (SEEEEEEEGE) show a composition bias toward acidic residues. Residues 95 to 105 (PKKKIKLKKSK) are compositionally biased toward basic residues. Polar residues predominate over residues 106–115 (NVATEGTSTQ). The Q motif motif lies at 192–220 (SAWKDLFVPRPVLRALSFLGFSAPTPIQV). Residues 224–528 (APAIRDKLDI…RILHKKHTKK (305 aa)) enclose the Helicase ATP-binding domain. 237 to 244 (AETGSGKT) provides a ligand contact to ATP. The interval 262-374 (NAAPPPSNTE…QTGNLKQELD (113 aa)) is disordered. Residues 277–293 (TRPEAGAETRSPGKAEA) show a composition bias toward basic and acidic residues. Phosphoserine occurs at positions 287 and 295. Residues 294-304 (ESDALPDDTVI) are compositionally biased toward acidic residues. Thr302 bears the Phosphothreonine mark. A Glycyl lysine isopeptide (Lys-Gly) (interchain with G-Cter in SUMO2) cross-link involves residue Lys370. The DEAD box signature appears at 471–474 (DEAD). Positions 578-723 (YLYYFLMQYP…LFPVQTKYMD (146 aa)) constitute a Helicase C-terminal domain. Residues Lys624, Lys808, and Lys825 each participate in a glycyl lysine isopeptide (Lys-Gly) (interchain with G-Cter in SUMO2) cross-link. Composition is skewed to polar residues over residues 799-814 (PLFT…TQSG) and 823-834 (PSKSESALSCLS). A disordered region spans residues 799–859 (PLFTESQKTK…EQPQPSTSAN (61 aa)).

Belongs to the DEAD box helicase family. DDX24/MAK5 subfamily. In terms of assembly, interacts with FADD. Interacts with RIPK1; this interaction disrupts RLR signaling activation of IFN-dependent transcription factor IRF7. Interacts with NIP7. Interacts with EP300; this interaction prevents TP53 acetylation mediated by EP300. Post-translationally, ubiquitinated by MDM2 without targeting DDX24 for proteasomal degradation. Instead, polyubiquitylated DDX24 promotes interaction with NIP7, a component of pre-rRNP processing complex, and associates with pre-rRNA molecules and pre-ribosomal particles.

The protein resides in the cytoplasm. The protein localises to the nucleus. It catalyses the reaction ATP + H2O = ADP + phosphate + H(+). In terms of biological role, ATP-dependent RNA helicase that plays a role in various aspects of RNA metabolism including pre-mRNA splicing and is thereby involved in different biological processes such as cell cycle regulation or innate immunity. Plays an inhibitory role in TP53 transcriptional activity and subsequently in TP53 controlled cell growth arrest and senescence by inhibiting its EP300 mediated acetylation. Negatively regulates cytosolic RNA-mediated innate immune signaling at least in part by affecting RIPK1/IRF7 interactions. Alternatively, possesses antiviral activity by recognizing gammaherpesvirus transcripts in the context of lytic reactivation. Plays an essential role in cell cycle regulation in vascular smooth muscle cells by interacting with and regulating FANCA (Fanconi anemia complementation group A) mRNA. This Pongo abelii (Sumatran orangutan) protein is ATP-dependent RNA helicase DDX24 (DDX24).